The chain runs to 467 residues: GTPase Obg (467 aa).

The Obg domain maps to 1-158 (MFYDEAKIFV…RWLRLELKLL (158 aa)). The OBG-type G domain maps to 159-333 (ADVGLVGLPN…LIRATWERLQ (175 aa)). Residues 165-172 (GLPNAGKS), 190-194 (FTTLE), 214-217 (DLPG), 285-288 (NKMD), and 314-316 (SAA) each bind GTP. Residues Ser172 and Thr192 each contribute to the Mg(2+) site. Residues 352-430 (TLDRSQERWE…VAGRELVWEP (79 aa)) form the OCT domain.

This sequence belongs to the TRAFAC class OBG-HflX-like GTPase superfamily. OBG GTPase family. As to quaternary structure, monomer. The cofactor is Mg(2+).

The protein resides in the cytoplasm. Its function is as follows. An essential GTPase which binds GTP, GDP and possibly (p)ppGpp with moderate affinity, with high nucleotide exchange rates and a fairly low GTP hydrolysis rate. Plays a role in control of the cell cycle, stress response, ribosome biogenesis and in those bacteria that undergo differentiation, in morphogenesis control. The protein is GTPase Obg of Thermomicrobium roseum (strain ATCC 27502 / DSM 5159 / P-2).